Here is a 76-residue protein sequence, read N- to C-terminus: ATP synthase subunit 9, mitochondrial (76 aa).

2 helical membrane-spanning segments follow: residues 11–31 (IGAG…GIVF) and 53–73 (ILGF…AFLI).

This sequence belongs to the ATPase C chain family. In terms of assembly, F-type ATPases have 2 components, CF(1) - the catalytic core - and CF(0) - the membrane proton channel. CF(1) has five subunits: alpha(3), beta(3), gamma(1), delta(1), epsilon(1). CF(0) has three main subunits: a, b and c.

It localises to the mitochondrion membrane. Functionally, this protein is one of the chains of the nonenzymatic membrane component (F0) of mitochondrial ATPase. The polypeptide is ATP synthase subunit 9, mitochondrial (ATP9) (Chondrus crispus (Carrageen Irish moss)).